Consider the following 1036-residue polypeptide: Potassium-transporting ATPase alpha chain 2 (1036 aa).

A disordered region spans residues 1–50 (MRRKTEIYSVELNGTKDVKPADQRDDKKFKGAKNKDLEPNKSHEKEELKK). Residues 1–99 (MRRKTEIYSV…PNTLTPPKQT (99 aa)) are Cytoplasmic-facing. The span at 14–50 (GTKDVKPADQRDDKKFKGAKNKDLEPNKSHEKEELKK) shows a compositional bias: basic and acidic residues. Residues 100–120 (PEIIKFLKQMVGGFSILLWIG) form a helical membrane-spanning segment. The Lumenal portion of the chain corresponds to 121–143 (AALCWIAFVIQYVNNSASLDNVY). A helical transmembrane segment spans residues 144-164 (LGAILVLVVILTGIFAYYQEA). The Cytoplasmic segment spans residues 165–300 (KSTNIMASFS…SEKTPIAIEI (136 aa)). A helical membrane pass occupies residues 301–320 (EHFVHIVAGVAVSIDIIFFI). At 321–332 (TAVCMKYYVLDA) the chain is on the lumenal side. The chain crosses the membrane as a helical span at residues 333–350 (IIFLISIIVANVPEGLLA). The Cytoplasmic portion of the chain corresponds to 351–784 (TVTVTLSLTA…EEGRLIFDNL (434 aa)). Asp-388 functions as the 4-aspartylphosphate intermediate in the catalytic mechanism. 2 residues coordinate Mg(2+): Asp-729 and Asp-733. The helical transmembrane segment at 785–804 (KKTIAYTLTKNIAELCPFLI) threads the bilayer. Residues 805-814 (YIVAGLPLPI) lie on the Lumenal side of the membrane. The chain crosses the membrane as a helical span at residues 815-835 (GTITILFIDLGTDIIPSIALA). Over 836-855 (YEKAESDIMNRKPRHKKKDR) the chain is Cytoplasmic. A helical transmembrane segment spans residues 856-878 (LVNTQLAIYSYLHIGLMQALGGF). The Lumenal segment spans residues 879 to 930 (LVYFTVYAQQGFWPTSLINLRVAWETDDINDLEDSYGQEWTRYQRKYLEWTG). The helical transmembrane segment at 931–950 (STAFFVAIMIQQIADLIIRK) threads the bilayer. The Cytoplasmic portion of the chain corresponds to 951–964 (TRRNSIFQQGLFRN). Ser-955 carries the phosphoserine; by PKA modification. Residues 965–983 (KVIWVGIASQVIVALILSY) traverse the membrane as a helical segment. At 984-998 (GLGSVPALSFTMLRV) the chain is on the lumenal side. A helical transmembrane segment spans residues 999–1019 (QYWFVAVPHAILIWVYDEMRK). Residues 1020 to 1036 (LFIRLYPGSWWDKNMYY) lie on the Cytoplasmic side of the membrane.

Belongs to the cation transport ATPase (P-type) (TC 3.A.3) family. Type IIC subfamily. The ATPase pump is composed of a catalytic alpha subunit and an auxiliary non-catalytic beta subunit. The alpha subunit pairs with the beta subunit of gastric H(+)/K(+) ATPase ATP4B or the beta subunit of Na(+)/K(+) ATPases ATP1B1 and ATP1B3; this interaction is required for the formation of a functionally active pump and its targeting at the plasma membrane. Expressed at high levels in distal colon, coagulating and preputial glands; at much lower levels in proximal colon, kidney, uterus, brain, placenta and lung; and at trace levels in heart and forestomach. Expressed in distal colon epithelium (at protein level). Expressed in anterior prostate (at protein level).

The protein resides in the apical cell membrane. The enzyme catalyses K(+)(out) + ATP + H2O + H(+)(in) = K(+)(in) + ADP + phosphate + 2 H(+)(out). It carries out the reaction K(+)(out) + Na(+)(in) + ATP + H2O = K(+)(in) + Na(+)(out) + ADP + phosphate + H(+). Up-regulated by K(+) ions in a dose-dependent way. Functionally, the catalytic subunit of a H(+)/K(+) ATPase and/or Na(+)/K(+) ATPase pump which transports K(+) ions in exchange for Na(+) and/or H(+) ions across the apical membrane of epithelial cells. Uses ATP as an energy source to pump K(+) ions into the cell while transporting Na(+) and/or H(+) ions to the extracellular compartment. Involved in the maintenance of electrolyte homeostasis through K(+) ion absorption in kidney and colon. In the airway epithelium, may play a primary role in mucus acidification regulating its viscosity and clearance. In Rattus norvegicus (Rat), this protein is Potassium-transporting ATPase alpha chain 2 (Atp12a).